Reading from the N-terminus, the 439-residue chain is FBD-associated F-box protein At5g56380 (439 aa).

The F-box domain maps to 1 to 61 (MDRISHLADE…LPETWGYQEP (61 aa)). Residues 358–406 (WNQPGSVPRCLSSSLETLEWVEYGGTHEEKELSTYLFKTAVCFKKASFT) enclose the FBD domain.

The protein is FBD-associated F-box protein At5g56380 of Arabidopsis thaliana (Mouse-ear cress).